The primary structure comprises 180 residues: Type-1 fimbrial protein subunit (180 aa).

The signal sequence occupies residues 1-22; that stretch reads MKKVLLPLAALVLSATASNAMA. Cys38 and Cys78 are disulfide-bonded.

Belongs to the fimbrial protein family.

The protein localises to the fimbrium. Its function is as follows. Fimbriae (also called pili), polar filaments radiating from the surface of the bacterium to a length of 0.5-1.5 micrometers and numbering 100-300 per cell, enable bacteria to colonize the epithelium of specific host organs. The protein is Type-1 fimbrial protein subunit (fimA) of Serratia marcescens.